The sequence spans 376 residues: 23S rRNA (uracil(747)-C(5))-methyltransferase RlmC (376 aa).

C3, C11, C14, and C87 together coordinate [4Fe-4S] cluster. Residues Q212, F241, E262, and N307 each contribute to the S-adenosyl-L-methionine site. Residue C334 is the Nucleophile of the active site.

This sequence belongs to the class I-like SAM-binding methyltransferase superfamily. RNA M5U methyltransferase family. RlmC subfamily.

It catalyses the reaction uridine(747) in 23S rRNA + S-adenosyl-L-methionine = 5-methyluridine(747) in 23S rRNA + S-adenosyl-L-homocysteine + H(+). Functionally, catalyzes the formation of 5-methyl-uridine at position 747 (m5U747) in 23S rRNA. This Salmonella choleraesuis (strain SC-B67) protein is 23S rRNA (uracil(747)-C(5))-methyltransferase RlmC.